The following is a 330-amino-acid chain: MSQNTLKVHDLNEDAEFDENGVEVFDEKALVEEEPSDNDLAEEELLSQGATQRVLDATQLYLGEIGYSPLLTAEEEVYFARRALRGDVASRRRMIESNLRLVVKIARRYGNRGLALLDLIEEGNLGLIRAVEKFDPERGFRFSTYATWWIRQTIERAIMNQTRTIRLPIHIVKELNVYLRTARELSHKLDHEPSAEEIAEQLDKPVDDVSRMLRLNERITSVDTPLGGDSEKALLDILADEKENGPEDTTQDDDMKQSIVKWLFELNAKQREVLARRFGLLGYEAATLEDVGREIGLTRERVRQIQVEGLRRLREILQTQGLNIEALFRK.

The tract at residues 56–89 is sigma-70 factor domain-1; the sequence is DATQLYLGEIGYSPLLTAEEEVYFARRALRGDVA. The sigma-70 factor domain-2 stretch occupies residues 94–164; it reads MIESNLRLVV…ERAIMNQTRT (71 aa). Residues 118–121 carry the Interaction with polymerase core subunit RpoC motif; the sequence is DLIE. The sigma-70 factor domain-3 stretch occupies residues 174 to 249; it reads ELNVYLRTAR…DEKENGPEDT (76 aa). Residues 262–315 form a sigma-70 factor domain-4 region; sequence WLFELNAKQREVLARRFGLLGYEAATLEDVGREIGLTRERVRQIQVEGLRRLRE. Residues 288–307 constitute a DNA-binding region (H-T-H motif); the sequence is LEDVGREIGLTRERVRQIQV.

The protein belongs to the sigma-70 factor family. RpoS subfamily. As to quaternary structure, interacts with the RNA polymerase core enzyme.

The protein localises to the cytoplasm. Sigma factors are initiation factors that promote the attachment of RNA polymerase to specific initiation sites and are then released. This sigma factor is the master transcriptional regulator of the stationary phase and the general stress response. The sequence is that of RNA polymerase sigma factor RpoS from Shigella flexneri.